Consider the following 227-residue polypeptide: RNA-free ribonuclease P (227 aa).

The protein belongs to the HARP family.

It carries out the reaction Endonucleolytic cleavage of RNA, removing 5'-extranucleotides from tRNA precursor.. In terms of biological role, RNA-free RNase P that catalyzes the removal of the 5'-leader sequence from pre-tRNA to produce the mature 5'-terminus. The chain is RNA-free ribonuclease P from Archaeoglobus fulgidus (strain ATCC 49558 / DSM 4304 / JCM 9628 / NBRC 100126 / VC-16).